Reading from the N-terminus, the 300-residue chain is D-alanine--D-alanine ligase (300 aa).

The region spanning 99 to 293 (KKILKYANIN…FAELLNSIVK (195 aa)) is the ATP-grasp domain. 126–181 (IEKIGYPVFVKPNSGGSSVATNLVKDKEGIKEAVELALKYDKEVMIENYTKGEEIT) contributes to the ATP binding site. 3 residues coordinate Mg(2+): aspartate 248, glutamate 260, and asparagine 262.

This sequence belongs to the D-alanine--D-alanine ligase family. The cofactor is Mg(2+). Mn(2+) is required as a cofactor.

It is found in the cytoplasm. It catalyses the reaction 2 D-alanine + ATP = D-alanyl-D-alanine + ADP + phosphate + H(+). The protein operates within cell wall biogenesis; peptidoglycan biosynthesis. Its function is as follows. Cell wall formation. In Clostridium botulinum (strain Okra / Type B1), this protein is D-alanine--D-alanine ligase.